A 563-amino-acid polypeptide reads, in one-letter code: Rab escort protein 1 (563 aa).

The segment at 538-563 (ELFKEETSPAENTTEEENDGGVEIED) is disordered. Residues 550-563 (TTEEENDGGVEIED) are compositionally biased toward acidic residues.

This sequence belongs to the Rab GDI family. In terms of assembly, heterotrimer composed of the alpha subunit RGTA, the beta subunit RGTB and REP; within this trimer, RGTA and RGTB form the catalytic component, while REP mediates peptide substrate binding. In terms of tissue distribution, expressed in roots, leaves and flowers.

Its subcellular location is the cytoplasm. Functionally, substrate-binding subunit of the Rab geranylgeranyltransferase (GGTase) complex. Binds unprenylated Rab proteins and presents the substrate peptide to the catalytic component composed of the alpha subunit RGTA and the beta subunit RGTB. Preferentially binds the GDP-bound form of Rab and stimulates geranylgeranylation of various Rab GTPases in vitro. The protein is Rab escort protein 1 of Arabidopsis thaliana (Mouse-ear cress).